Here is a 342-residue protein sequence, read N- to C-terminus: Ribosomal RNA small subunit methyltransferase H (342 aa).

S-adenosyl-L-methionine contacts are provided by residues Gly-62–His-64, Asp-82, Phe-108, Asp-129, and Gln-136. The segment at Arg-280 to Pro-319 is disordered. Residues Lys-297–Gly-309 show a composition bias toward basic residues.

The protein belongs to the methyltransferase superfamily. RsmH family.

Its subcellular location is the cytoplasm. It carries out the reaction cytidine(1402) in 16S rRNA + S-adenosyl-L-methionine = N(4)-methylcytidine(1402) in 16S rRNA + S-adenosyl-L-homocysteine + H(+). Its function is as follows. Specifically methylates the N4 position of cytidine in position 1402 (C1402) of 16S rRNA. The protein is Ribosomal RNA small subunit methyltransferase H of Psychrobacter cryohalolentis (strain ATCC BAA-1226 / DSM 17306 / VKM B-2378 / K5).